The sequence spans 333 residues: GTPase Obg (333 aa).

The Obg domain maps to 1–159; sequence MKFIDQTIIQ…RDIQLELILI (159 aa). The OBG-type G domain maps to 160-332; the sequence is ADVGTLGMPN…LCSDIAFYLQ (173 aa). GTP is bound by residues 166 to 173, 191 to 195, 212 to 215, 282 to 285, and 313 to 315; these read GMPNAGKS, FTTLN, DIPG, NKID, and SSI. Residues Ser-173 and Thr-193 each coordinate Mg(2+).

Belongs to the TRAFAC class OBG-HflX-like GTPase superfamily. OBG GTPase family. Monomer. Requires Mg(2+) as cofactor.

Its subcellular location is the cytoplasm. Its function is as follows. An essential GTPase which binds GTP, GDP and possibly (p)ppGpp with moderate affinity, with high nucleotide exchange rates and a fairly low GTP hydrolysis rate. Plays a role in control of the cell cycle, stress response, ribosome biogenesis and in those bacteria that undergo differentiation, in morphogenesis control. This chain is GTPase Obg, found in Buchnera aphidicola subsp. Schizaphis graminum (strain Sg).